A 632-amino-acid polypeptide reads, in one-letter code: Asparagine synthetase [glutamine-hydrolyzing] 1 (632 aa).

The active-site For GATase activity is cysteine 2. Residues 2–214 (CGFVGVFNKH…PGSQFTIRPD (213 aa)) form the Glutamine amidotransferase type-2 domain. L-glutamine is bound by residues 52–56 (RLSII), 77–79 (NGE), and aspartate 102. ATP-binding positions include valine 288 and 361–362 (SG).

The protein belongs to the asparagine synthetase family.

It carries out the reaction L-aspartate + L-glutamine + ATP + H2O = L-asparagine + L-glutamate + AMP + diphosphate + H(+). Its pathway is amino-acid biosynthesis; L-asparagine biosynthesis; L-asparagine from L-aspartate (L-Gln route): step 1/1. Functionally, main asparagine synthetase in vegetative cells. This is Asparagine synthetase [glutamine-hydrolyzing] 1 (asnB) from Bacillus subtilis (strain 168).